The primary structure comprises 187 residues: Adenylate kinase (187 aa).

Residue 10-15 (GSGKGT) participates in ATP binding. An NMP region spans residues 30-59 (STGDLLRSEVVAGTPLGLQAKQVMAQGDLV). AMP contacts are provided by residues Thr31, Arg36, 57–59 (DLV), 85–88 (GYPR), and Gln92. The interval 126-136 (GRAQAEGREDD) is LID. Residue Arg127 coordinates ATP. The AMP site is built by Arg133 and Arg144. Gly172 is an ATP binding site.

Belongs to the adenylate kinase family. In terms of assembly, monomer.

It localises to the cytoplasm. The catalysed reaction is AMP + ATP = 2 ADP. It functions in the pathway purine metabolism; AMP biosynthesis via salvage pathway; AMP from ADP: step 1/1. Functionally, catalyzes the reversible transfer of the terminal phosphate group between ATP and AMP. Plays an important role in cellular energy homeostasis and in adenine nucleotide metabolism. The chain is Adenylate kinase from Xylella fastidiosa (strain M23).